The sequence spans 343 residues: MGTADERRFEVLRAIVADFVATHEPIGSKSLVERHNLGVSSATIRNDMAVLEAEGYIAQPHTSSGRVPTEKGYREFVDRLDDVKPLSMVERRAIQGFLESGVDLDDVLRRAVRLLAQLTRQVAVVQYPTLSTSKVRHLEVIALTPARLLMVVITDSGRVDQRIVELGDVIDDHQLSQLRELLGQALEGKKLAAASVAVADLAGQLSGAGGLGDAVGRSATVLLESLVEHTEERLLMGGTANLTRNAADFGGSLRSILEALEEQVVVLRLLAAQQEAGKVTVRIGHETEAEQIVGTSMVSTAYGSNDTVYGGMGVLGPTRMDYPGTIASVAAVALYIGEVLGAR.

This sequence belongs to the HrcA family.

Functionally, negative regulator of class I heat shock genes (grpE-dnaK-dnaJ and groELS operons). Prevents heat-shock induction of these operons. This Mycobacterium marinum (strain ATCC BAA-535 / M) protein is Heat-inducible transcription repressor HrcA.